Consider the following 591-residue polypeptide: Fidgetin-like protein 1 (591 aa).

2 disordered regions span residues 1–117 and 223–249; these read MYSP…KSSL and GQEP…SQPI. Residues 17 to 26 show a composition bias toward basic and acidic residues; sequence KRPETEENRG. A compositionally biased stretch (acidic residues) spans 76 to 93; sequence DDDPESIVIDEDDEEDEP. Polar residues predominate over residues 237–249; that stretch reads RQSSSQSNHSQPI. Residues Ala319 and 359-364 contribute to the ATP site; that span reads GTGKTM.

The protein belongs to the AAA ATPase family. In terms of assembly, hexamer. Mg(2+) is required as a cofactor.

The protein localises to the nucleus. It carries out the reaction ATP + H2O = ADP + phosphate + H(+). In terms of biological role, has a role in spindle assembly which acts in the progression through mitosis during embryogenesis. Required for fertility. The protein is Fidgetin-like protein 1 (figl-1) of Caenorhabditis briggsae.